The primary structure comprises 275 residues: Protein unc-50 homolog (275 aa).

Over residues 1-26 (MTQYSHVKYTQSPTPSVVSGYSSASR) the composition is skewed to polar residues. A disordered region spans residues 1-39 (MTQYSHVKYTQSPTPSVVSGYSSASRLHSPLPPPANHRR). Residues 1–99 (MTQYSHVKYT…TKSQFARDDP (99 aa)) lie on the Cytoplasmic side of the membrane. A helical transmembrane segment spans residues 100–120 (AFLVLLVVCLCVTSLGFAYVL). Over 121–129 (GLSFWQSIS) the chain is Lumenal. The helical transmembrane segment at 130–150 (FIFYVVFVDCIFVGIIIASFF) threads the bilayer. The Cytoplasmic portion of the chain corresponds to 151 to 178 (WAVTNRYLRTNSLEPDIEWGYAFDVHLN). A helical transmembrane segment spans residues 179–199 (AFFPPLMLLHFIQLFFYNWLI). The Lumenal portion of the chain corresponds to 200-207 (SQTWFISR). The chain crosses the membrane as a helical span at residues 208 to 228 (FLGNTFWLMGMGYYVYITFLG). The Cytoplasmic portion of the chain corresponds to 229 to 239 (YNCIPHLKNTR). The chain crosses the membrane as a helical span at residues 240–260 (IILIALPIIFLLFLVVTIIGW). Over 261–275 (NATISFVNFYKYRVY) the chain is Lumenal.

This sequence belongs to the unc-50 family.

It is found in the golgi apparatus membrane. Required for cell surface expression of acetylcholine receptors. The sequence is that of Protein unc-50 homolog from Drosophila melanogaster (Fruit fly).